The primary structure comprises 72 residues: LITAF domain-containing protein (72 aa).

The region spanning 1–71 (MPVQAVCPYC…CQRELFYYHR (71 aa)) is the LITAF domain. Positions 7 and 10 each coordinate Zn(2+). A membrane-binding amphipathic helix region spans residues 22 to 45 (PGALTWLLCTTLFLFGYVLGCCFL). Positions 59 and 62 each coordinate Zn(2+).

The protein belongs to the CDIP1/LITAF family.

It is found in the membrane. The chain is LITAF domain-containing protein from Homo sapiens (Human).